We begin with the raw amino-acid sequence, 377 residues long: MSQTPLSPPPVGGRVVVAMSGGVDSSVTAALLKEQGHDVVGLTMRLYDHGKPLGPGARTCCAGQDIHDARRVADRLGIAHYVLDYESRFREDVIEPFAASYGRGETPIPCVLCNQTVKFRDLLAAALDLGGTALATGHYVRRLDGPEGPRLYRAVDPGRDQSYFLFATTKGQLGRLLFPLGAMASKDETRAIARRLGLAVGDKPDSQDICFVPDGDYAKVVERLRPGVVEAGEIVDLDGTVLGHHPGLIHFTVGQRRGVGIGGSAEPLYVIALDTATHRLVVGPHAALARREIAVSGLNWLGEGEGPASAGTRARIKIRHASPPFPGQIFPGAAAGEARVVLDEPAHGVAPGQAAVFYGLDDNDARVLGGGWIGASR.

Residues 18–25 (AMSGGVDS) and M44 each bind ATP. The Nucleophile role is filled by C113. C113 and C210 are oxidised to a cystine. Residue G137 participates in ATP binding. The tract at residues 159–161 (RDQ) is interaction with tRNA. C210 acts as the Cysteine persulfide intermediate in catalysis.

Belongs to the MnmA/TRMU family.

The protein localises to the cytoplasm. It catalyses the reaction S-sulfanyl-L-cysteinyl-[protein] + uridine(34) in tRNA + AH2 + ATP = 2-thiouridine(34) in tRNA + L-cysteinyl-[protein] + A + AMP + diphosphate + H(+). In terms of biological role, catalyzes the 2-thiolation of uridine at the wobble position (U34) of tRNA, leading to the formation of s(2)U34. This chain is tRNA-specific 2-thiouridylase MnmA, found in Rhodospirillum rubrum (strain ATCC 11170 / ATH 1.1.1 / DSM 467 / LMG 4362 / NCIMB 8255 / S1).